The sequence spans 860 residues: Eukaryotic translation initiation factor 3 subunit C (860 aa).

The interval 1-79 (MSSRFFHGGS…ESDEEEDRVT (79 aa)) is disordered. Composition is skewed to acidic residues over residues 16–53 (SSDE…DDEA) and 67–76 (DLDESDEEED). In terms of domain architecture, PCI spans 598–772 (FHMHINLELL…NAIVFRKGVE (175 aa)). The disordered stretch occupies residues 808–860 (AFQRDQGPGGRLGRGQGRGGQRTAGGRPPIGGQQRRPGGQQFSGGALGGAIKA). Positions 814-830 (GPGGRLGRGQGRGGQRT) are enriched in gly residues. Residues 831-847 (AGGRPPIGGQQRRPGGQ) show a composition bias toward low complexity. A compositionally biased stretch (gly residues) spans 848-860 (QFSGGALGGAIKA).

Belongs to the eIF-3 subunit C family. In terms of assembly, component of the eukaryotic translation initiation factor 3 (eIF-3) complex.

It is found in the cytoplasm. Functionally, component of the eukaryotic translation initiation factor 3 (eIF-3) complex, which is involved in protein synthesis of a specialized repertoire of mRNAs and, together with other initiation factors, stimulates binding of mRNA and methionyl-tRNAi to the 40S ribosome. The eIF-3 complex specifically targets and initiates translation of a subset of mRNAs involved in cell proliferation. The protein is Eukaryotic translation initiation factor 3 subunit C of Coccidioides immitis (strain RS) (Valley fever fungus).